The chain runs to 182 residues: Histone deacetylase complex subunit SAP30L (182 aa).

Residue M1 is modified to N-acetylmethionine. Over residues M1–S10 the composition is skewed to acidic residues. Residues M1–P22 form a disordered region. 2 disulfide bridges follow: C28-C29 and C37-C73. Residues C28–H76 form an Atypical zinc finger. Residue K48 forms a Glycyl lysine isopeptide (Lys-Gly) (interchain with G-Cter in SUMO2) linkage. The segment at R84–A103 is disordered. The short motif at N85–K90 is the Nuclear localization signal (NLS) element. Positions R87–R89 are important for DNA and phosphoinositide binding. A phosphoserine mark is found at S92 and S98. Glycyl lysine isopeptide (Lys-Gly) (interchain with G-Cter in SUMO2) cross-links involve residues K154, K165, and K174.

The protein belongs to the SAP30 family. As to quaternary structure, interacts with components of the histone deacetylase complex SIN3A, HDAC1 and HDAC2. Binds histones and nucleosomes. Interacts with FEZ1.

The protein resides in the nucleus. Its subcellular location is the nucleolus. Functionally, functions as a transcription repressor, probably via its interaction with histone deacetylase complexes. Involved in the functional recruitment of the class 1 Sin3-histone deacetylase complex (HDAC) to the nucleolus. Binds DNA, apparently without sequence-specificity, and bends bound double-stranded DNA. Binds phosphoinositol phosphates (phosphoinositol 3-phosphate, phosphoinositol 4-phosphate and phosphoinositol 5-phosphate) via the same basic sequence motif that mediates DNA binding and nuclear import. The chain is Histone deacetylase complex subunit SAP30L (Sap30l) from Mus musculus (Mouse).